The primary structure comprises 570 residues: Glutamate--tRNA ligase (570 aa).

Positions 107–117 (PNPDFVLHLGS) match the 'HIGH' region motif.

Belongs to the class-I aminoacyl-tRNA synthetase family. Glutamate--tRNA ligase type 2 subfamily.

Its subcellular location is the cytoplasm. The catalysed reaction is tRNA(Glu) + L-glutamate + ATP = L-glutamyl-tRNA(Glu) + AMP + diphosphate. Its function is as follows. Catalyzes the attachment of glutamate to tRNA(Glu) in a two-step reaction: glutamate is first activated by ATP to form Glu-AMP and then transferred to the acceptor end of tRNA(Glu). This is Glutamate--tRNA ligase from Pyrobaculum aerophilum (strain ATCC 51768 / DSM 7523 / JCM 9630 / CIP 104966 / NBRC 100827 / IM2).